The sequence spans 259 residues: Eukaryotic translation initiation factor 3 subunit G-2 (259 aa).

Residues 179–257 enclose the RRM domain; the sequence is SAVRISNLSE…LILSVEWSKP (79 aa).

This sequence belongs to the eIF-3 subunit G family. In terms of assembly, component of the eukaryotic translation initiation factor 3 (eIF-3) complex. The eIF-3 complex interacts with pix.

Its subcellular location is the cytoplasm. Its function is as follows. RNA-binding component of the eukaryotic translation initiation factor 3 (eIF-3) complex, which is involved in protein synthesis of a specialized repertoire of mRNAs and, together with other initiation factors, stimulates binding of mRNA and methionyl-tRNAi to the 40S ribosome. The eIF-3 complex specifically targets and initiates translation of a subset of mRNAs involved in cell proliferation. This subunit can bind 18S rRNA. This chain is Eukaryotic translation initiation factor 3 subunit G-2, found in Drosophila mojavensis (Fruit fly).